The primary structure comprises 363 residues: Cobalt-precorrin-5B C(1)-methyltransferase (363 aa).

This sequence belongs to the CbiD family.

The enzyme catalyses Co-precorrin-5B + S-adenosyl-L-methionine = Co-precorrin-6A + S-adenosyl-L-homocysteine. It functions in the pathway cofactor biosynthesis; adenosylcobalamin biosynthesis; cob(II)yrinate a,c-diamide from sirohydrochlorin (anaerobic route): step 6/10. Functionally, catalyzes the methylation of C-1 in cobalt-precorrin-5B to form cobalt-precorrin-6A. The protein is Cobalt-precorrin-5B C(1)-methyltransferase of Burkholderia mallei (strain ATCC 23344).